The primary structure comprises 347 residues: L-threonine 3-dehydrogenase (347 aa).

A Zn(2+)-binding site is contributed by C43. Active-site charge relay system residues include T45 and H48. Residues H68, E69, C98, C101, C104, and C112 each contribute to the Zn(2+) site. NAD(+) contacts are provided by residues I180, D200, R205, L267–L269, and I292–T293.

It belongs to the zinc-containing alcohol dehydrogenase family. Homotetramer. Zn(2+) serves as cofactor.

It localises to the cytoplasm. It carries out the reaction L-threonine + NAD(+) = (2S)-2-amino-3-oxobutanoate + NADH + H(+). It participates in amino-acid degradation; L-threonine degradation via oxydo-reductase pathway; glycine from L-threonine: step 1/2. Functionally, catalyzes the NAD(+)-dependent oxidation of L-threonine to 2-amino-3-ketobutyrate. In Bacillus subtilis (strain 168), this protein is L-threonine 3-dehydrogenase.